Here is a 358-residue protein sequence, read N- to C-terminus: F-box only protein 25 (358 aa).

Residues 1–83 (MPFLGQDWRS…NDTNTQSFYR (83 aa)) are interaction with beta-actin. One can recognise an F-box domain in the interval 226–274 (LTLSDLPLHMLNNILYRFSDGWDIITLGQVTPTLYMLSEDRQLWKKLCQ).

In terms of assembly, part of a SCF (SKP1-cullin-F-box) protein ligase complex consisting of FBXO25, SKP1, CUL1 and RBX1. Interacts directly with SKP1 and CUL1. Interacts (via C-terminus) with beta-actin (via N-terminus).

The protein localises to the nucleus. It participates in protein modification; protein ubiquitination. Substrate-recognition component of the SCF (SKP1-CUL1-F-box protein)-type E3 ubiquitin ligase complex. May play a role in accumulation of expanded polyglutamine (polyQ) protein huntingtin (HTT). In Macaca fascicularis (Crab-eating macaque), this protein is F-box only protein 25 (FBXO25).